The primary structure comprises 150 residues: C-type lectin 37Db (150 aa).

An N-terminal signal peptide occupies residues 1-20 (MMVKLLLLFLVCWSALPLES). The C-type lectin domain maps to 31–148 (IGEKQYYISL…CYSSVAFICQ (118 aa)). 2 disulfides stabilise this stretch: cysteine 52-cysteine 147 and cysteine 122-cysteine 139. Residues asparagine 107 and asparagine 115 are each glycosylated (N-linked (GlcNAc...) asparagine).

It is found in the secreted. Its function is as follows. Galactose-specific lectin that displays calcium-dependent activity. Binds to the surface of hemocytes and enhances hemocyte encapsulation and melanization. This is likely by interacting with carbohydrates on the surface of the hemocytes. Also displays agglutination activity against the Gram-negative bacterium E.coli. This is C-type lectin 37Db from Drosophila melanogaster (Fruit fly).